A 225-amino-acid polypeptide reads, in one-letter code: Class E basic helix-loop-helix protein 23 (225 aa).

The interval 35 to 104 is disordered; sequence EAARGYGTPG…PREQRSLRLS (70 aa). A bHLH domain is found at 100-154; that stretch reads SLRLSINARERRRMHDLNDALDGLRAVIPYAHSPSVRKLSKIATLLLAKNYILMQ.

Its subcellular location is the nucleus. Functionally, may function as transcriptional repressor. May modulate the expression of genes required for the differentiation and/or maintenance of pancreatic and neuronal cell types. May be important for rod bipolar cell maturation. This chain is Class E basic helix-loop-helix protein 23 (BHLHE23), found in Homo sapiens (Human).